A 341-amino-acid chain; its full sequence is Phenylalanine--tRNA ligase alpha subunit (341 aa).

E256 provides a ligand contact to Mg(2+).

This sequence belongs to the class-II aminoacyl-tRNA synthetase family. Phe-tRNA synthetase alpha subunit type 1 subfamily. As to quaternary structure, tetramer of two alpha and two beta subunits. Mg(2+) serves as cofactor.

It localises to the cytoplasm. The catalysed reaction is tRNA(Phe) + L-phenylalanine + ATP = L-phenylalanyl-tRNA(Phe) + AMP + diphosphate + H(+). The protein is Phenylalanine--tRNA ligase alpha subunit of Chlamydia caviae (strain ATCC VR-813 / DSM 19441 / 03DC25 / GPIC) (Chlamydophila caviae).